We begin with the raw amino-acid sequence, 119 residues long: MIRKIEKKEIRNRIHRRIRRKLSGTAERPRLAVFRSVAHIYAQVIDDAQGQTLVSASSVDKDGKSKGGNVAAAKAIGKLVAERAKEKGIKSVVFDRGGYQYHGRVKALADAAREAGLEF.

The protein belongs to the universal ribosomal protein uL18 family. As to quaternary structure, part of the 50S ribosomal subunit; part of the 5S rRNA/L5/L18/L25 subcomplex. Contacts the 5S and 23S rRNAs.

In terms of biological role, this is one of the proteins that bind and probably mediate the attachment of the 5S RNA into the large ribosomal subunit, where it forms part of the central protuberance. The polypeptide is Large ribosomal subunit protein uL18 (Solibacter usitatus (strain Ellin6076)).